The following is a 246-amino-acid chain: Bis(5'-nucleosyl)-tetraphosphatase PrpE [asymmetrical] (246 aa).

This sequence belongs to the PrpE family. The cofactor is Ni(2+).

It carries out the reaction P(1),P(4)-bis(5'-guanosyl) tetraphosphate + H2O = GMP + GTP + 2 H(+). In terms of biological role, asymmetrically hydrolyzes Ap4p to yield AMP and ATP. The sequence is that of Bis(5'-nucleosyl)-tetraphosphatase PrpE [asymmetrical] from Bacillus cereus (strain AH820).